A 252-amino-acid chain; its full sequence is Chitooligosaccharide deacetylase (252 aa).

Mg(2+) contacts are provided by H61 and H125.

Belongs to the YdjC deacetylase family. ChbG subfamily. Homodimer. It depends on Mg(2+) as a cofactor.

The protein localises to the cytoplasm. It catalyses the reaction N,N'-diacetylchitobiose + H2O = N-acetyl-beta-D-glucosaminyl-(1-&gt;4)-D-glucosamine + acetate. It carries out the reaction diacetylchitobiose-6'-phosphate + H2O = N'-monoacetylchitobiose-6'-phosphate + acetate. The protein operates within glycan degradation; chitin degradation. Involved in the degradation of chitin. ChbG is essential for growth on the acetylated chitooligosaccharides chitobiose and chitotriose but is dispensable for growth on cellobiose and chitosan dimer, the deacetylated form of chitobiose. Deacetylation of chitobiose-6-P and chitotriose-6-P is necessary for both the activation of the chb promoter by the regulatory protein ChbR and the hydrolysis of phosphorylated beta-glucosides by the phospho-beta-glucosidase ChbF. Catalyzes the removal of only one acetyl group from chitobiose-6-P to yield monoacetylchitobiose-6-P, the inducer of ChbR and the substrate of ChbF. This is Chitooligosaccharide deacetylase from Salmonella heidelberg (strain SL476).